Consider the following 518-residue polypeptide: G-protein coupled receptor 161 (518 aa).

Topologically, residues 1 to 26 (MNSSSDGANEGAGAAADNGPTKVAES) are extracellular. Asn-2 is a glycosylation site (N-linked (GlcNAc...) asparagine). A helical membrane pass occupies residues 27 to 47 (IAIIIIDILICLGNLVIVVTL). Residues 48 to 59 (YKKSYLLSLSNK) are Cytoplasmic-facing. The helical transmembrane segment at 60–80 (FVFSLTFSNLLLSMLVLPFVV) threads the bilayer. Residues 81-97 (VSSILREWIFGVVWCNF) are Extracellular-facing. The cysteines at positions 95 and 173 are disulfide-linked. The N-linked (GlcNAc...) asparagine glycan is linked to Asn-96. A helical membrane pass occupies residues 98–118 (SALLYMLISSASMLTLGIIAI). Topologically, residues 119–138 (DRYYAVLYPMVYPMKITGNR) are cytoplasmic. The chain crosses the membrane as a helical span at residues 139 to 159 (AVLALVYVWLHSLIGCLPPLF). The Extracellular portion of the chain corresponds to 160–185 (GWSTLEFDHFKWMCVAAWHKEAGYTA). A helical transmembrane segment spans residues 186–206 (FWQVWCALLPFIVMMICYGFI). Over 207-264 (FRVARIKARKIHCGTVIIVQEASQKNGRKNSSTSTSSSGSRKNGFSSIVYSANQCKAL) the chain is Cytoplasmic. Residues 265 to 285 (ITILVVIGAFVLTWGPYMIVI) form a helical membrane-spanning segment. Residues 286-301 (STEALKGKNSVSPVLE) are Extracellular-facing. Residues 302 to 322 (TLATWLSFTSAICHPLIYGLW) form a helical membrane-spanning segment. Residues 323–518 (NKTVRKELLG…GNIETSKCDV (196 aa)) are Cytoplasmic-facing. The tract at residues 429–448 (EVEQKNDARTMPTQPTAPSE) is disordered. The segment covering 439–448 (MPTQPTAPSE) has biased composition (polar residues).

It belongs to the G-protein coupled receptor 1 family.

The protein localises to the cell projection. It is found in the cilium membrane. The protein resides in the cell membrane. In terms of biological role, key negative regulator of Shh signaling during neural tube development. Recruited to primary cilia and acts as a regulator of the PKA-dependent basal repression machinery in Shh signaling by increasing cAMP levels, leading to promote the PKA-dependent processing of gli3 into gli3r and repress the Shh signaling. In presence of shh, it is removed from primary cilia, preventing its activity and allowing activation of the Shh signaling. The protein is G-protein coupled receptor 161 (gpr161) of Xenopus tropicalis (Western clawed frog).